The primary structure comprises 488 residues: Lysine--tRNA ligase (488 aa).

2 residues coordinate Mg(2+): Glu-398 and Glu-405.

Belongs to the class-II aminoacyl-tRNA synthetase family. In terms of assembly, homodimer. Mg(2+) is required as a cofactor.

Its subcellular location is the cytoplasm. The enzyme catalyses tRNA(Lys) + L-lysine + ATP = L-lysyl-tRNA(Lys) + AMP + diphosphate. The sequence is that of Lysine--tRNA ligase from Carboxydothermus hydrogenoformans (strain ATCC BAA-161 / DSM 6008 / Z-2901).